A 266-amino-acid polypeptide reads, in one-letter code: Zinc transporter ZupT (266 aa).

Transmembrane regions (helical) follow at residues Leu8–Val28, Leu36–Ile56, Ala71–Asp91, Gly123–Phe143, Gly152–Val172, Phe185–Leu205, Phe209–Ile229, and Leu246–Thr266. Residues Asn134 and Glu137 each coordinate Fe(2+). Residues Glu137 and His162 each coordinate Zn(2+). Fe(2+) contacts are provided by Asn163, Glu166, and Glu195. Glu166 contacts Zn(2+).

This sequence belongs to the ZIP transporter (TC 2.A.5) family. ZupT subfamily.

It localises to the cell inner membrane. The enzyme catalyses Zn(2+)(in) = Zn(2+)(out). In terms of biological role, mediates zinc uptake. May also transport other divalent cations. This Chlorobium luteolum (strain DSM 273 / BCRC 81028 / 2530) (Pelodictyon luteolum) protein is Zinc transporter ZupT.